Consider the following 411-residue polypeptide: Squalene synthase (411 aa).

Helical transmembrane passes span 281–301 and 388–408; these read SIFR…AMCY and SPVL…QLSG.

The protein belongs to the phytoene/squalene synthase family. Mg(2+) serves as cofactor.

It localises to the endoplasmic reticulum membrane. It catalyses the reaction 2 (2E,6E)-farnesyl diphosphate + NADPH + H(+) = squalene + 2 diphosphate + NADP(+). The enzyme catalyses 2 (2E,6E)-farnesyl diphosphate + NADH + H(+) = squalene + 2 diphosphate + NAD(+). It functions in the pathway terpene metabolism; lanosterol biosynthesis; lanosterol from farnesyl diphosphate: step 1/3. The protein is Squalene synthase of Nicotiana benthamiana.